We begin with the raw amino-acid sequence, 58 residues long: Small ribosomal subunit protein bS21 (58 aa).

Over residues 32–42 (IRKREHYEKPS) the composition is skewed to basic and acidic residues. Residues 32–58 (IRKREHYEKPSVRRKKKSEAARKRKFN) are disordered. Residues 43 to 58 (VRRKKKSEAARKRKFN) show a composition bias toward basic residues.

It belongs to the bacterial ribosomal protein bS21 family.

The sequence is that of Small ribosomal subunit protein bS21 from Lachnospira eligens (strain ATCC 27750 / DSM 3376 / VPI C15-48 / C15-B4) (Eubacterium eligens).